Here is a 108-residue protein sequence, read N- to C-terminus: Phosphoribosyl-ATP pyrophosphatase (108 aa).

It belongs to the PRA-PH family.

The protein resides in the cytoplasm. It carries out the reaction 1-(5-phospho-beta-D-ribosyl)-ATP + H2O = 1-(5-phospho-beta-D-ribosyl)-5'-AMP + diphosphate + H(+). It participates in amino-acid biosynthesis; L-histidine biosynthesis; L-histidine from 5-phospho-alpha-D-ribose 1-diphosphate: step 2/9. This is Phosphoribosyl-ATP pyrophosphatase from Trichlorobacter lovleyi (strain ATCC BAA-1151 / DSM 17278 / SZ) (Geobacter lovleyi).